Consider the following 178-residue polypeptide: Large ribosomal subunit protein bL25 (178 aa).

It belongs to the bacterial ribosomal protein bL25 family. CTC subfamily. In terms of assembly, part of the 50S ribosomal subunit; part of the 5S rRNA/L5/L18/L25 subcomplex. Contacts the 5S rRNA. Binds to the 5S rRNA independently of L5 and L18.

Its function is as follows. This is one of the proteins that binds to the 5S RNA in the ribosome where it forms part of the central protuberance. The chain is Large ribosomal subunit protein bL25 from Campylobacter lari (strain RM2100 / D67 / ATCC BAA-1060).